The chain runs to 446 residues: Exodeoxyribonuclease 7 large subunit (446 aa).

Belongs to the XseA family. In terms of assembly, heterooligomer composed of large and small subunits.

It is found in the cytoplasm. The catalysed reaction is Exonucleolytic cleavage in either 5'- to 3'- or 3'- to 5'-direction to yield nucleoside 5'-phosphates.. In terms of biological role, bidirectionally degrades single-stranded DNA into large acid-insoluble oligonucleotides, which are then degraded further into small acid-soluble oligonucleotides. This chain is Exodeoxyribonuclease 7 large subunit, found in Xanthomonas campestris pv. campestris (strain 8004).